The following is a 115-amino-acid chain: Probable 4-amino-4-deoxy-L-arabinose-phosphoundecaprenol flippase subunit ArnE (115 aa).

4 consecutive transmembrane segments (helical) span residues 1 to 21 (MIVGYLLVVLVSLLTCGGQLC), 43 to 63 (WLALAVLLLGLGMAVWLNVLQ), 65 to 85 (LPLSLAYPTLSLNFVLVTLAA), and 93 to 113 (TTARHWYGVASIMLGILLMSI). In terms of domain architecture, EamA spans 44-113 (LALAVLLLGL…IMLGILLMSI (70 aa)).

It belongs to the ArnE family. In terms of assembly, heterodimer of ArnE and ArnF.

The protein localises to the cell inner membrane. It participates in bacterial outer membrane biogenesis; lipopolysaccharide biosynthesis. Functionally, translocates 4-amino-4-deoxy-L-arabinose-phosphoundecaprenol (alpha-L-Ara4N-phosphoundecaprenol) from the cytoplasmic to the periplasmic side of the inner membrane. The sequence is that of Probable 4-amino-4-deoxy-L-arabinose-phosphoundecaprenol flippase subunit ArnE from Serratia proteamaculans (strain 568).